The following is a 461-amino-acid chain: Cysteine--tRNA ligase (461 aa).

Residue cysteine 28 coordinates Zn(2+). The 'HIGH' region motif lies at 30-40; sequence VTIYDLCHIGH. The Zn(2+) site is built by cysteine 209, histidine 234, and glutamate 238. A 'KMSKS' region motif is present at residues 266-270; it reads KMSKS. An ATP-binding site is contributed by lysine 269.

Belongs to the class-I aminoacyl-tRNA synthetase family. In terms of assembly, monomer. Zn(2+) serves as cofactor.

It localises to the cytoplasm. It catalyses the reaction tRNA(Cys) + L-cysteine + ATP = L-cysteinyl-tRNA(Cys) + AMP + diphosphate. In Serratia proteamaculans (strain 568), this protein is Cysteine--tRNA ligase.